Here is a 278-residue protein sequence, read N- to C-terminus: Probable endonuclease LCL3 (278 aa).

The chain crosses the membrane as a helical span at residues F15 to Y37. The TNase-like domain maps to R58–Q263. The active site involves R154. D159 is a Ca(2+) binding site. Residues E162 and R202 contribute to the active site.

Belongs to the LCL3 family.

The protein localises to the mitochondrion. It is found in the membrane. The sequence is that of Probable endonuclease LCL3 (LCL3) from Vanderwaltozyma polyspora (strain ATCC 22028 / DSM 70294 / BCRC 21397 / CBS 2163 / NBRC 10782 / NRRL Y-8283 / UCD 57-17) (Kluyveromyces polysporus).